The following is a 179-amino-acid chain: Large ribosomal subunit protein uL10 (179 aa).

The protein belongs to the universal ribosomal protein uL10 family. Part of the ribosomal stalk of the 50S ribosomal subunit. The N-terminus interacts with L11 and the large rRNA to form the base of the stalk. The C-terminus forms an elongated spine to which L12 dimers bind in a sequential fashion forming a multimeric L10(L12)X complex.

Functionally, forms part of the ribosomal stalk, playing a central role in the interaction of the ribosome with GTP-bound translation factors. The chain is Large ribosomal subunit protein uL10 from Thermotoga neapolitana (strain ATCC 49049 / DSM 4359 / NBRC 107923 / NS-E).